The primary structure comprises 614 residues: Dihydroxy-acid dehydratase 1 (614 aa).

Residue D81 participates in Mg(2+) binding. C122 contacts [2Fe-2S] cluster. D123 and K124 together coordinate Mg(2+). K124 bears the N6-carboxylysine mark. C195 contacts [2Fe-2S] cluster. Position 491 (E491) interacts with Mg(2+). S517 functions as the Proton acceptor in the catalytic mechanism.

It belongs to the IlvD/Edd family. In terms of assembly, homodimer. Requires [2Fe-2S] cluster as cofactor. It depends on Mg(2+) as a cofactor.

It catalyses the reaction (2R)-2,3-dihydroxy-3-methylbutanoate = 3-methyl-2-oxobutanoate + H2O. It carries out the reaction (2R,3R)-2,3-dihydroxy-3-methylpentanoate = (S)-3-methyl-2-oxopentanoate + H2O. The protein operates within amino-acid biosynthesis; L-isoleucine biosynthesis; L-isoleucine from 2-oxobutanoate: step 3/4. It participates in amino-acid biosynthesis; L-valine biosynthesis; L-valine from pyruvate: step 3/4. Its function is as follows. Functions in the biosynthesis of branched-chain amino acids. Catalyzes the dehydration of (2R,3R)-2,3-dihydroxy-3-methylpentanoate (2,3-dihydroxy-3-methylvalerate) into 2-oxo-3-methylpentanoate (2-oxo-3-methylvalerate) and of (2R)-2,3-dihydroxy-3-methylbutanoate (2,3-dihydroxyisovalerate) into 2-oxo-3-methylbutanoate (2-oxoisovalerate), the penultimate precursor to L-isoleucine and L-valine, respectively. This Mesorhizobium japonicum (strain LMG 29417 / CECT 9101 / MAFF 303099) (Mesorhizobium loti (strain MAFF 303099)) protein is Dihydroxy-acid dehydratase 1.